A 212-amino-acid chain; its full sequence is Phosphatidylserine decarboxylase proenzyme (212 aa).

The active-site Schiff-base intermediate with substrate; via pyruvic acid is S182. S182 is modified (pyruvic acid (Ser); by autocatalysis).

Belongs to the phosphatidylserine decarboxylase family. PSD-A subfamily. In terms of assembly, heterodimer of a large membrane-associated beta subunit and a small pyruvoyl-containing alpha subunit. Requires pyruvate as cofactor. Is synthesized initially as an inactive proenzyme. Formation of the active enzyme involves a self-maturation process in which the active site pyruvoyl group is generated from an internal serine residue via an autocatalytic post-translational modification. Two non-identical subunits are generated from the proenzyme in this reaction, and the pyruvate is formed at the N-terminus of the alpha chain, which is derived from the carboxyl end of the proenzyme. The post-translation cleavage follows an unusual pathway, termed non-hydrolytic serinolysis, in which the side chain hydroxyl group of the serine supplies its oxygen atom to form the C-terminus of the beta chain, while the remainder of the serine residue undergoes an oxidative deamination to produce ammonia and the pyruvoyl prosthetic group on the alpha chain.

The protein resides in the cell membrane. The catalysed reaction is a 1,2-diacyl-sn-glycero-3-phospho-L-serine + H(+) = a 1,2-diacyl-sn-glycero-3-phosphoethanolamine + CO2. Its pathway is phospholipid metabolism; phosphatidylethanolamine biosynthesis; phosphatidylethanolamine from CDP-diacylglycerol: step 2/2. Catalyzes the formation of phosphatidylethanolamine (PtdEtn) from phosphatidylserine (PtdSer). This Paraburkholderia phymatum (strain DSM 17167 / CIP 108236 / LMG 21445 / STM815) (Burkholderia phymatum) protein is Phosphatidylserine decarboxylase proenzyme.